A 189-amino-acid polypeptide reads, in one-letter code: NADH-quinone oxidoreductase subunit B (189 aa).

Residues Cys-39, Cys-40, Cys-104, and Cys-135 each contribute to the [4Fe-4S] cluster site.

Belongs to the complex I 20 kDa subunit family. NDH-1 is composed of 14 different subunits. Subunits NuoB, C, D, E, F, and G constitute the peripheral sector of the complex. The cofactor is [4Fe-4S] cluster.

It localises to the cell inner membrane. It catalyses the reaction a quinone + NADH + 5 H(+)(in) = a quinol + NAD(+) + 4 H(+)(out). Functionally, NDH-1 shuttles electrons from NADH, via FMN and iron-sulfur (Fe-S) centers, to quinones in the respiratory chain. The immediate electron acceptor for the enzyme in this species is believed to be a menaquinone. Couples the redox reaction to proton translocation (for every two electrons transferred, four hydrogen ions are translocated across the cytoplasmic membrane), and thus conserves the redox energy in a proton gradient. The protein is NADH-quinone oxidoreductase subunit B of Chlorobium luteolum (strain DSM 273 / BCRC 81028 / 2530) (Pelodictyon luteolum).